The following is a 212-amino-acid chain: Methylthioribulose-1-phosphate dehydratase (212 aa).

Residues His-97 and His-99 each coordinate Zn(2+).

It belongs to the aldolase class II family. MtnB subfamily. In terms of assembly, homotetramer. Requires Zn(2+) as cofactor.

It catalyses the reaction 5-(methylsulfanyl)-D-ribulose 1-phosphate = 5-methylsulfanyl-2,3-dioxopentyl phosphate + H2O. Its pathway is amino-acid biosynthesis; L-methionine biosynthesis via salvage pathway; L-methionine from S-methyl-5-thio-alpha-D-ribose 1-phosphate: step 2/6. Functionally, catalyzes the dehydration of methylthioribulose-1-phosphate (MTRu-1-P) into 2,3-diketo-5-methylthiopentyl-1-phosphate (DK-MTP-1-P). The protein is Methylthioribulose-1-phosphate dehydratase of Bacillus thuringiensis subsp. konkukian (strain 97-27).